Reading from the N-terminus, the 272-residue chain is Bis(5'-nucleosyl)-tetraphosphatase, symmetrical (272 aa).

The protein belongs to the Ap4A hydrolase family.

It catalyses the reaction P(1),P(4)-bis(5'-adenosyl) tetraphosphate + H2O = 2 ADP + 2 H(+). Functionally, hydrolyzes diadenosine 5',5'''-P1,P4-tetraphosphate to yield ADP. The chain is Bis(5'-nucleosyl)-tetraphosphatase, symmetrical from Chromohalobacter salexigens (strain ATCC BAA-138 / DSM 3043 / CIP 106854 / NCIMB 13768 / 1H11).